The sequence spans 237 residues: Probable transcriptional regulatory protein WS1016 (237 aa).

It belongs to the TACO1 family.

It localises to the cytoplasm. This chain is Probable transcriptional regulatory protein WS1016, found in Wolinella succinogenes (strain ATCC 29543 / DSM 1740 / CCUG 13145 / JCM 31913 / LMG 7466 / NCTC 11488 / FDC 602W) (Vibrio succinogenes).